Consider the following 223-residue polypeptide: Cytotoxic T-lymphocyte protein 4 (223 aa).

The first 35 residues, 1–35, serve as a signal peptide directing secretion; that stretch reads MACLGLRRYKAQLQLPSRTWPFVALLTLLFIPVFS. The region spanning 36 to 145 is the Ig-like V-type domain; that stretch reads EAIQVTQPSV…PPPYFVGMGN (110 aa). Over 36-161 the chain is Extracellular; the sequence is EAIQVTQPSV…IDPEPCPDSD (126 aa). Residues 46–50 form a homodimerization region; that stretch reads VLASS. 2 cysteine pairs are disulfide-bonded: Cys-58–Cys-129 and Cys-85–Cys-103. N-linked (GlcNAc...) asparagine glycosylation is found at Asn-108 and Asn-113. Residues 134-139 are important for interaction with CD80 and CD86; the sequence is MYPPPY. N-linked (GlcNAc...) asparagine glycosylation occurs at Asn-145. Positions 150–155 are homodimerization; that stretch reads YVIDPE. A helical transmembrane segment spans residues 162–182; it reads FLLWILVAVSLGLFFYSFLVS. Over 183–223 the chain is Cytoplasmic; sequence AVSLSKMLKKRSPLTTGVYVKMPPTEPECEKQFQPYFIPIN. At Tyr-201 the chain carries Phosphotyrosine; by TXK and JAK2.

As to quaternary structure, homodimer; disulfide-linked. Binds to CD80/B7-1 and CD86/B7.2. Interacts with ICOSLG. Post-translationally, N-glycosylation is important for dimerization. Phosphorylation at Tyr-201 prevents binding to the AP-2 adapter complex, blocks endocytosis, and leads to retention of CTLA4 on the cell surface. In terms of tissue distribution, widely expressed with highest levels in lymphoid tissues.

The protein resides in the cell membrane. Its function is as follows. Inhibitory receptor acting as a major negative regulator of T-cell responses. The affinity of CTLA4 for its natural B7 family ligands, CD80 and CD86, is considerably stronger than the affinity of their cognate stimulatory coreceptor CD28. The sequence is that of Cytotoxic T-lymphocyte protein 4 (Ctla4) from Mus musculus (Mouse).